The primary structure comprises 163 residues: uncharacterized protein (163 aa).

This is an uncharacterized protein from Orgyia pseudotsugata (Douglas-fir tussock moth).